The sequence spans 840 residues: MVSVFRSEEMCLSQLFLQVEAAYCCVAELGELGLVQFKDLNMNVNSFQRKFVNEVRRCESLERILRFLEDEMQNEIVVQLLEKSPLTPLPREMITLETVLEKLEGELQEANQNQQALKQSFLELTELKYLLKKTQDFFETETNLADDFFTEDTSGLLELKAVPAYMTGKLGFIAGVINRERMASFERLLWRICRGNVYLKFSEMDAPLEDPVTKEEIQKNIFIIFYQGEQLRQKIKKICDGFRATVYPCPEPAVERREMLESVNVRLEDLITVITQTESHRQRLLQEAAANWHSWLIKVQKMKAVYHILNMCNIDVTQQCVIAEIWFPVADATRIKRALEQGMELSGSSMAPIMTTVQSKTAPPTFNRTNKFTAGFQNIVDAYGVGSYREINPAPYTIITFPFLFAVMFGDCGHGTVMLLAALWMILNERRLLSQKTDNEIWNTFFHGRYLILLMGIFSIYTGLIYNDCFSKSLNIFGSSWSVQPMFRNGTWNTHVMEESLYLQLDPAIPGVYFGNPYPFGIDPIWNLASNKLTFLNSYKMKMSVILGIVQMVFGVILSLFNHIYFRRTLNIILQFIPEMIFILCLFGYLVFMIIFKWCCFDVHVSQHAPSILIHFINMFLFNYSDSSNAPLYKHQQEVQSFFVVMALISVPWMLLIKPFILRASHRKSQLQASRIQEDATENIEGDSSSPSSRSGQRTSADTHGALDDHGEEFNFGDVFVHQAIHTIEYCLGCISNTASYLRLWALSLAHAQLSEVLWTMVMNSGLQTRGWGGIVGVFIIFAVFAVLTVAILLIMEGLSAFLHALRLHWVEFQNKFYVGDGYKFSPFSFKHILDGTAEE.

Topologically, residues 1 to 390 (MVSVFRSEEM…DAYGVGSYRE (390 aa)) are cytoplasmic. A helical transmembrane segment spans residues 391-409 (INPAPYTIITFPFLFAVMF). Over 410-411 (GD) the chain is Vacuolar. Residues 412–428 (CGHGTVMLLAALWMILN) traverse the membrane as a helical segment. The Cytoplasmic portion of the chain corresponds to 429–443 (ERRLLSQKTDNEIWN). A helical transmembrane segment spans residues 444 to 473 (TFFHGRYLILLMGIFSIYTGLIYNDCFSKS). Residues 474 to 538 (LNIFGSSWSV…ASNKLTFLNS (65 aa)) lie on the Vacuolar side of the membrane. Residues 539-558 (YKMKMSVILGIVQMVFGVIL) traverse the membrane as a helical segment. At 559-576 (SLFNHIYFRRTLNIILQF) the chain is on the cytoplasmic side. A helical transmembrane segment spans residues 577–597 (IPEMIFILCLFGYLVFMIIFK). Residues 598-642 (WCCFDVHVSQHAPSILIHFINMFLFNYSDSSNAPLYKHQQEVQSF) lie on the Vacuolar side of the membrane. A helical transmembrane segment spans residues 643–662 (FVVMALISVPWMLLIKPFIL). The Cytoplasmic segment spans residues 663 to 727 (RASHRKSQLQ…DVFVHQAIHT (65 aa)). Residues 675–704 (RIQEDATENIEGDSSSPSSRSGQRTSADTH) are disordered. Residues 728-752 (IEYCLGCISNTASYLRLWALSLAHA) form a helical membrane-spanning segment. Topologically, residues 753 to 773 (QLSEVLWTMVMNSGLQTRGWG) are vacuolar. The helical transmembrane segment at 774–812 (GIVGVFIIFAVFAVLTVAILLIMEGLSAFLHALRLHWVE) threads the bilayer. Residues 813–840 (FQNKFYVGDGYKFSPFSFKHILDGTAEE) lie on the Cytoplasmic side of the membrane.

It belongs to the V-ATPase 116 kDa subunit family. V-ATPase is a heteromultimeric enzyme made up of two complexes: the ATP-hydrolytic V1 complex and the proton translocation V0 complex. The V1 complex consists of three catalytic AB heterodimers that form a heterohexamer, three peripheral stalks each consisting of EG heterodimers, one central rotor including subunits D and F, and the regulatory subunits C and H. The proton translocation complex V0 consists of the proton transport subunit a, a ring of proteolipid subunits c9c'', rotary subunit d, subunits e and f, and the accessory subunits ATP6AP1/Ac45 and ATP6AP2/PRR. Interacts with the V1 complex V-ATPase subunit A ATP6V1A. Interacts with the V0 complex V-ATPase subunit c ATP6V0C. Expressed in adult and fetal kidney. Found in the inner ear.

It is found in the apical cell membrane. It localises to the basolateral cell membrane. Its function is as follows. Subunit of the V0 complex of vacuolar(H+)-ATPase (V-ATPase), a multisubunit enzyme composed of a peripheral complex (V1) that hydrolyzes ATP and a membrane integral complex (V0) that translocates protons. V-ATPase is responsible for acidifying and maintaining the pH of intracellular compartments and in some cell types, is targeted to the plasma membrane, where it is responsible for acidifying the extracellular environment. Involved in normal vectorial acid transport into the urine by the kidney. This chain is V-type proton ATPase 116 kDa subunit a 4 (ATP6V0A4), found in Homo sapiens (Human).